The primary structure comprises 424 residues: Serine--tRNA ligase (424 aa).

230-232 is a binding site for L-serine; the sequence is TAE. 261-263 contacts ATP; that stretch reads RSE. An L-serine-binding site is contributed by glutamate 284. 348 to 351 contacts ATP; it reads EISS. Serine 384 contacts L-serine.

Belongs to the class-II aminoacyl-tRNA synthetase family. Type-1 seryl-tRNA synthetase subfamily. In terms of assembly, homodimer. The tRNA molecule binds across the dimer.

It localises to the cytoplasm. The enzyme catalyses tRNA(Ser) + L-serine + ATP = L-seryl-tRNA(Ser) + AMP + diphosphate + H(+). The catalysed reaction is tRNA(Sec) + L-serine + ATP = L-seryl-tRNA(Sec) + AMP + diphosphate + H(+). It functions in the pathway aminoacyl-tRNA biosynthesis; selenocysteinyl-tRNA(Sec) biosynthesis; L-seryl-tRNA(Sec) from L-serine and tRNA(Sec): step 1/1. In terms of biological role, catalyzes the attachment of serine to tRNA(Ser). Is also able to aminoacylate tRNA(Sec) with serine, to form the misacylated tRNA L-seryl-tRNA(Sec), which will be further converted into selenocysteinyl-tRNA(Sec). This is Serine--tRNA ligase from Streptococcus pneumoniae (strain Hungary19A-6).